The primary structure comprises 172 residues: uncharacterized protein (172 aa).

This is an uncharacterized protein from Orgyia pseudotsugata (Douglas-fir tussock moth).